The following is a 425-amino-acid chain: Phosphoribosylamine--glycine ligase (425 aa).

The ATP-grasp domain maps to 110-317 (KEFMKRHGIP…LFDALLASVE (208 aa)). An ATP-binding site is contributed by 137-198 (ETCPTFPQVI…EAFLSGQEAS (62 aa)). 2 residues coordinate Mg(2+): Glu-287 and Asn-289.

The protein belongs to the GARS family. Mg(2+) serves as cofactor. Requires Mn(2+) as cofactor.

The catalysed reaction is 5-phospho-beta-D-ribosylamine + glycine + ATP = N(1)-(5-phospho-beta-D-ribosyl)glycinamide + ADP + phosphate + H(+). Its pathway is purine metabolism; IMP biosynthesis via de novo pathway; N(1)-(5-phospho-D-ribosyl)glycinamide from 5-phospho-alpha-D-ribose 1-diphosphate: step 2/2. In Chlorobaculum tepidum (strain ATCC 49652 / DSM 12025 / NBRC 103806 / TLS) (Chlorobium tepidum), this protein is Phosphoribosylamine--glycine ligase.